The sequence spans 280 residues: 2-dehydro-3-deoxyphosphooctonate aldolase (280 aa).

The protein belongs to the KdsA family.

It localises to the cytoplasm. It catalyses the reaction D-arabinose 5-phosphate + phosphoenolpyruvate + H2O = 3-deoxy-alpha-D-manno-2-octulosonate-8-phosphate + phosphate. It participates in carbohydrate biosynthesis; 3-deoxy-D-manno-octulosonate biosynthesis; 3-deoxy-D-manno-octulosonate from D-ribulose 5-phosphate: step 2/3. Its pathway is bacterial outer membrane biogenesis; lipopolysaccharide biosynthesis. The polypeptide is 2-dehydro-3-deoxyphosphooctonate aldolase (Neisseria meningitidis serogroup B (strain ATCC BAA-335 / MC58)).